Consider the following 83-residue polypeptide: U15-theraphotoxin-Cg1a (83 aa).

The first 21 residues, Met1–Ala21, serve as a signal peptide directing secretion. Positions Ser22–Arg49 are excised as a propeptide. 3 disulfide bridges follow: Cys51-Cys66, Cys58-Cys71, and Cys65-Cys77. An Alanine amide modification is found at Ala81.

The protein belongs to the neurotoxin 10 (Hwtx-1) family. 66 (Jztx-24) subfamily. As to expression, expressed by the venom gland.

The protein resides in the secreted. Probable ion channel inhibitor. The protein is U15-theraphotoxin-Cg1a of Chilobrachys guangxiensis (Chinese earth tiger tarantula).